Reading from the N-terminus, the 362-residue chain is Cobalt-precorrin-5B C(1)-methyltransferase (362 aa).

Belongs to the CbiD family.

The catalysed reaction is Co-precorrin-5B + S-adenosyl-L-methionine = Co-precorrin-6A + S-adenosyl-L-homocysteine. It participates in cofactor biosynthesis; adenosylcobalamin biosynthesis; cob(II)yrinate a,c-diamide from sirohydrochlorin (anaerobic route): step 6/10. Catalyzes the methylation of C-1 in cobalt-precorrin-5B to form cobalt-precorrin-6A. The chain is Cobalt-precorrin-5B C(1)-methyltransferase from Synechococcus sp. (strain CC9902).